A 462-amino-acid polypeptide reads, in one-letter code: A-type ATP synthase subunit B (462 aa).

This sequence belongs to the ATPase alpha/beta chains family. In terms of assembly, has multiple subunits with at least A(3), B(3), C, D, E, F, H, I and proteolipid K(x).

It localises to the cell membrane. Functionally, component of the A-type ATP synthase that produces ATP from ADP in the presence of a proton gradient across the membrane. The B chain is a regulatory subunit. In Methanobrevibacter smithii (strain ATCC 35061 / DSM 861 / OCM 144 / PS), this protein is A-type ATP synthase subunit B.